Here is a 192-residue protein sequence, read N- to C-terminus: Putative manganese efflux pump MntP (192 aa).

A run of 6 helical transmembrane segments spans residues 3 to 23 (FSAILLLALGLAMDATAVAAA), 36 to 56 (VLLVAGFFGGAQALMPVIGWL), 65 to 85 (VQAWDHWIAFVLLAFIGGKML), 112 to 132 (FVLAIATSIDALAVGITLPML), 136 to 156 (FAISVVTIGVVTALLSAAGLF), and 171 to 191 (LAGGVVLIGLGFKILLEHLVL).

It belongs to the MntP (TC 9.B.29) family.

Its subcellular location is the cell inner membrane. Probably functions as a manganese efflux pump. In Sorangium cellulosum (strain So ce56) (Polyangium cellulosum (strain So ce56)), this protein is Putative manganese efflux pump MntP.